Consider the following 333-residue polypeptide: Geranylgeranyl pyrophosphate synthase olcC (333 aa).

Isopentenyl diphosphate contacts are provided by Lys61, Arg64, and His93. Positions 100 and 104 each coordinate Mg(2+). Arg109 is a binding site for dimethylallyl diphosphate. Arg110 is a binding site for isopentenyl diphosphate. Residues Lys187, Thr188, and Gln221 each contribute to the dimethylallyl diphosphate site. Asp224 contributes to the Mg(2+) binding site. Positions 228, 238, and 248 each coordinate dimethylallyl diphosphate.

This sequence belongs to the FPP/GGPP synthase family. It depends on Mg(2+) as a cofactor.

It carries out the reaction isopentenyl diphosphate + dimethylallyl diphosphate = (2E)-geranyl diphosphate + diphosphate. It catalyses the reaction isopentenyl diphosphate + (2E)-geranyl diphosphate = (2E,6E)-farnesyl diphosphate + diphosphate. The enzyme catalyses isopentenyl diphosphate + (2E,6E)-farnesyl diphosphate = (2E,6E,10E)-geranylgeranyl diphosphate + diphosphate. Its pathway is secondary metabolite biosynthesis; terpenoid biosynthesis. Functionally, geranylgeranyl pyrophosphate synthase; part of the gene cluster that mediates the biosynthesis of 15-deoxyoxalicine B. The first step of the pathway is the synthesis of nicotinyl-CoA from nicotinic acid by the nicotinic acid-CoA ligase olcI. Nicotinyl-CoA is then a substrate of polyketide synthase olcA to produce 4-hydroxy-6-(3-pyridinyl)-2H-pyran-2-one (HPPO) which is further prenylated by the polyprenyl transferase olcH to yield geranylgeranyl-HPPO. Geranylgeranyl pyrophosphate is provided by the cluster-specific geranylgeranyl pyrophosphate synthase olcC. The FAD-dependent monooxygenase olcE catalyzes the epoxidation of geranylgeranyl-HPPO and the terpene cyclase olcD catalyzes the cyclization of the terpenoid component, resulting in the formation of the tricyclic terpene moiety seen in predecaturin E. The cytochrome P450 monooxygenase then catalyzes the allylic oxidation of predecaturin E, which is followed by spirocylization with concomitant loss of one molecule of water to form decaturin E. Decaturin E is the substrate of the cytochrome P450 monooxygenase olcJ which hydroxylates it at the C-29 position to form decaturin F. The short-chain dehydrogenase/reductase olcF may catalyze the oxidation of decaturin F to generate the 29-hydroxyl-27-one intermediate, and subsequent hemiacetal formation probably leads to the formation of decaturin C. The dioxygenase olcK may be a peroxisomal enzyme that catalyzes the hydroxylation of decaturin C into decaturin A once decaturin C is shuttled into the peroxisome by the MFS transporter olcL. Finally the cytochrome P450 monooxygenase olcB catalyzes the oxidative rearrangement to yield 15-deoxyoxalicine B. In the absence of olcJ, decaturin E may be shunted to a pathway in which it is oxidized to a ketone, possibly by olcF, to form decaturin D, which undergoes further allylic oxidation to yield decaturin G. Moreover, in the absence of oclK or oclL, oclB can convert decaturin C into 15-deoxyoxalicine A. In Penicillium canescens, this protein is Geranylgeranyl pyrophosphate synthase olcC.